A 297-amino-acid polypeptide reads, in one-letter code: Probable DNA polymerase III subunit delta (297 aa).

It belongs to the DNA polymerase HolA subunit family. As to quaternary structure, component of the DNA clamp loading complex consisting of tau(3):delta(1):delta'(1). The DNA polymerase III holoenzyme complex contains at least 10 different subunits organized into 3 functionally essential subassemblies: the Pol III core, the beta sliding clamp processivity factor and the clamp-loading complex. The Pol III core (subunits alpha, epsilon and theta) contains the polymerase and the 3'-5' exonuclease proofreading activities. The polymerase is tethered to the template via the dimeric beta sliding clamp processivity factor. The DNA clamp-loading complex assembles the beta sliding clamp onto the primed template and plays a central role in the organization and communication at the replication fork.

The enzyme catalyses DNA(n) + a 2'-deoxyribonucleoside 5'-triphosphate = DNA(n+1) + diphosphate. Its function is as follows. Part of the beta sliding clamp loading complex, which hydrolyzes ATP to load the beta clamp onto primed DNA to form the DNA replication pre-initiation complex. DNA polymerase III is a complex, multichain enzyme responsible for most of the replicative synthesis in bacteria. This DNA polymerase also exhibits 3'-5' exonuclease activity. The delta subunit is the wrench that will open the beta subunit dimer. The DNA clamp loading complex (tau(3),delta,delta') is thought to load beta dimers onto DNA by binding ATP which alters the complex's conformation so it can bind beta sliding clamp dimers and open them at one interface. Primed DNA is recognized, ATP is hydrolyzed releasing the clamp loading complex and closing the beta sliding clamp ring around the primed DNA. The sequence is that of Probable DNA polymerase III subunit delta from Mycoplasma genitalium (strain ATCC 33530 / DSM 19775 / NCTC 10195 / G37) (Mycoplasmoides genitalium).